A 107-amino-acid polypeptide reads, in one-letter code: MTKSELVAQLASRFPQLVLKDADFAVKTMLDAMSDALSKGHRIEIRGFGSFGLNRRPARVGRNPKSGEKVQVPEKHVPHFKPGKELRERVDGRAGEPLKNDEPEDGQ.

Residues 54–107 (NRRPARVGRNPKSGEKVQVPEKHVPHFKPGKELRERVDGRAGEPLKNDEPEDGQ) are disordered. Basic and acidic residues predominate over residues 65-101 (KSGEKVQVPEKHVPHFKPGKELRERVDGRAGEPLKND).

This sequence belongs to the bacterial histone-like protein family. Heterodimer of an alpha and a beta chain.

In terms of biological role, this protein is one of the two subunits of integration host factor, a specific DNA-binding protein that functions in genetic recombination as well as in transcriptional and translational control. The protein is Integration host factor subunit beta of Burkholderia thailandensis (strain ATCC 700388 / DSM 13276 / CCUG 48851 / CIP 106301 / E264).